A 282-amino-acid chain; its full sequence is MKLAVITDSTATLPIDLKQDKAIFSLDIPVIIDDETYFEGRNLSIDDFYQKMADSQNLPKTSQPSLSELDNLLGLLSSKGYTHVIGLFLAGGISGFWQNIQFLAEEHPEIEMAFPDSKITSAPLGSMVKNVLDWSRQGMTFQAILNKLQEQIDRTTAFIMVDDLNHLVKGGRLSNGSALLGNLLSIKPILRFDEEGKIVVYEKVRTEKKAMKRLVEILNDLIADGQYNVSIIHSKAQDKADYLKRLLQDSGYQYDIEEVHFGAVIATHLGEGAIAFGVTPRL.

The DegV domain occupies 3 to 280 (LAVITDSTAT…EGAIAFGVTP (278 aa)). Residues threonine 61 and serine 94 each contribute to the hexadecanoate site.

May bind long-chain fatty acids, such as palmitate, and may play a role in lipid transport or fatty acid metabolism. This chain is DegV domain-containing protein M6_Spy0690, found in Streptococcus pyogenes serotype M6 (strain ATCC BAA-946 / MGAS10394).